We begin with the raw amino-acid sequence, 245 residues long: Collagen triple helix repeat-containing protein 1 (245 aa).

Positions M1 to A32 are cleaved as a signal peptide. In terms of domain architecture, Collagen-like spans Q59 to K92. The interval V64–G87 is disordered. A glycan (N-linked (GlcNAc...) asparagine) is linked at N188.

Post-translationally, N-glycosylated.

The protein localises to the secreted. Its subcellular location is the extracellular space. It localises to the extracellular matrix. Functionally, may act as a negative regulator of collagen matrix deposition. This Mus musculus (Mouse) protein is Collagen triple helix repeat-containing protein 1 (Cthrc1).